An 84-amino-acid polypeptide reads, in one-letter code: MVSVKVLFFGEAFQLVGKREETVEFPAETDYEELRRIILEKYPALSKIEKVMMLAVDQEYANPGDRFELERFTEIAVIPPLSGG.

Glycine 84 is modified (1-thioglycine; alternate). Position 84 is a glycyl adenylate; alternate (glycine 84).

The protein belongs to the MoaD family. MOCS2A subfamily. As to quaternary structure, heterotetramer; composed of 2 small (MOCS2A) and 2 large (MOCS2B) subunits. In terms of processing, C-terminal thiocarboxylation occurs in 2 steps, it is first acyl-adenylated (-COAMP) via the hesA/moeB/thiF part of MOCS3, then thiocarboxylated (-COSH) via the rhodanese domain of MOCS3.

It localises to the cytoplasm. It participates in cofactor biosynthesis; molybdopterin biosynthesis. Its function is as follows. Acts as a sulfur carrier required for molybdopterin biosynthesis. Component of the molybdopterin synthase complex that catalyzes the conversion of precursor Z into molybdopterin by mediating the incorporation of 2 sulfur atoms into precursor Z to generate a dithiolene group. In the complex, serves as sulfur donor by being thiocarboxylated (-COSH) at its C-terminus by MOCS3. After interaction with MOCS2B, the sulfur is then transferred to precursor Z to form molybdopterin. This chain is Molybdopterin synthase sulfur carrier subunit, found in Caenorhabditis briggsae.